The following is an 815-amino-acid chain: Protein pygopus (815 aa).

2 disordered regions span residues 1–107 (MTHN…QVSA) and 147–711 (GMGG…GPMG). The Nuclear localization signal signature appears at 39–45 (PKKRRKT). Low complexity predominate over residues 46-73 (SSAANSAAAVAAAAAAAAAANSMQQQQA). Residues 74–86 (PPTPQDLLPPPPM) are compositionally biased toward pro residues. Low complexity predominate over residues 188-199 (RGMSPMHPHQMG). 2 stretches are compositionally biased toward gly residues: residues 230 to 248 (PMGG…GMGG) and 257 to 269 (GMGG…GGPN). Over residues 307 to 316 (LGPPSGPGPG) the composition is skewed to pro residues. 4 stretches are compositionally biased toward low complexity: residues 323 to 341 (GPQQ…NGQM), 407 to 424 (SNNN…NQNP), 444 to 478 (PSVS…VPTS), and 495 to 545 (GPSP…HQQH). Over residues 569–580 (PQQPSHLGPPHP) the composition is skewed to pro residues. Gly residues predominate over residues 602–621 (GGPGMHGGPAGMPPHMGGGP). Positions 622–636 (NPHMMGGPHGNAGPH) are enriched in low complexity. Residues 640-656 (GHMGGVPGPGPGPGGMN) show a composition bias toward gly residues. A compositionally biased stretch (basic residues) spans 663–675 (MSPHHGHPHHHHN). Over residues 678–711 (GGPGPNMFGGGGGGPMGPGGPMGNMGPMGGGPMG) the composition is skewed to gly residues. The PHD-type zinc finger occupies 747 to 805 (IYPCGMCHKEVNDNDEAVFCESGCNFFFHRTCVGLTEAAFQMLNKEVFAEWCCDKCVSS).

Binds to BCL9 via the PHD-type zinc finger motif, and thereby becomes part of the nuclear ARM/PAN complex. In terms of tissue distribution, ubiquitous throughout embryogenesis and larval development.

The protein localises to the nucleus. Involved in signal transduction through the Wnt pathway. The polypeptide is Protein pygopus (pygo) (Drosophila melanogaster (Fruit fly)).